The following is a 108-amino-acid chain: Large ribosomal subunit protein uL23 (108 aa).

It belongs to the universal ribosomal protein uL23 family. Part of the 50S ribosomal subunit. Contacts protein L29, and trigger factor when it is bound to the ribosome.

In terms of biological role, one of the early assembly proteins it binds 23S rRNA. One of the proteins that surrounds the polypeptide exit tunnel on the outside of the ribosome. Forms the main docking site for trigger factor binding to the ribosome. The sequence is that of Large ribosomal subunit protein uL23 from Polaromonas sp. (strain JS666 / ATCC BAA-500).